The primary structure comprises 54 residues: Putative ankyrin repeat protein RC0701 (54 aa).

The stretch at 17-46 (SGKTPLDWYSDYNATKIVETLIKNGGNVSS) is one ANK repeat.

The protein is Putative ankyrin repeat protein RC0701 of Rickettsia conorii (strain ATCC VR-613 / Malish 7).